Consider the following 1022-residue polypeptide: MSRRTAEMFQQAFLSTLLCVALVPLHAQFDDEPVTSCTEKTDCPISVYFVIDTSESIALQTVPIQSLVDQIKQFIPRFIEKLENEVYQNQVSITWMFGGLHYSDVVEIYSPLTRSKDTYLTKLRAIRYLGRGTFTDCAISNMTQQFQSQTARDVKFAVVITDGHVTGSPCGGMKMQAERARDMGIKLFAVAPSEDVYEQGLREIASPPHDLYRSNYTITPKDALHIDENTIERIIKAMKHEAYAECYKMTCLEIAGPAGPKGYRGQKGAKGNMGEPGSPGLKGRQGDPGIEGPIGYPGPKGVPGLKGEKGEIGSDGRRGAAGLAGRNGTDGQKGKLGRIGPPGCKGDRGDKGPDGYPGDAGDQGERGDEGMKGDPGRPGRSGPPGPPGEKGSPGIPGNPGAQGPGGTKGRKGETGPPGPKGEPGRRGDPGTKGSKGGPGAKGERGDPGPEGPRGLPGEVGNKGARGDQGLPGPRGPTGAVGEPGNIGSRGDPGDLGPRGDAGPPGPKGDRGRPGFSYPGPRGPQGDKGEKGQPGPKGGRGELGPKGTQGTKGEKGEPGDPGPRGEPGTRGPPGEAGPEGTPGPPGDPGLTDCDVMTYVRETCGCCDCEKRCGALDIMFVIDSSESIGYTNFTLEKNFVVNVVSRLGSIAKDPKSETGARVGVVQYSHEGTFEAIKLDDERINSLSSFKEAVKRLEWIAGGTWTPSALQFAYNKLIKESRREKAQVFAVVITDGRYDPRDDDKNLGALCGRDVLVNTIGIGDIFDQPEQSETLVSIACNEPQRVQKMRLFSDLVAEEFIDKMEDMLCPDPQIVCPELPCQTELAVAQCTQRPVDIVFLLDGSERIGEQNFHRAHHFVEQVAQQLTLARRNDDNMNARIALLQYGSEREQNVVFPLTYNLTEISNALAQIKYLDSSSNIGSAIIHAINNIVLSPGNGQRVARRNAELSFVFITDGITGSKNLEEAINSMKKQDVMPTVVALGSDVDMDVLLKLGLGDRAAIFREKDYESLSQPSFFDRFIRWIC.

Positions 1-27 (MSRRTAEMFQQAFLSTLLCVALVPLHA) are cleaved as a signal peptide. The tract at residues 28–255 (QFDDEPVTSC…CYKMTCLEIA (228 aa)) is nonhelical region. In terms of domain architecture, VWFA 1 spans 44–168 (PISVYFVIDT…VITDGHVTGS (125 aa)). N-linked (GlcNAc...) asparagine glycans are attached at residues Asn141 and Asn215. Residues 256–590 (GPAGPKGYRG…PGPPGDPGLT (335 aa)) form a triple-helical region region. The segment at 263–587 (YRGQKGAKGN…EGTPGPPGDP (325 aa)) is disordered. The segment covering 287–299 (DPGIEGPIGYPGP) has biased composition (low complexity). Residues 306 to 318 (KGEKGEIGSDGRR) are compositionally biased toward basic and acidic residues. N-linked (GlcNAc...) asparagine glycosylation is present at Asn327. 2 consecutive short sequence motifs (cell attachment site) follow at residues 348–350 (RGD) and 366–368 (RGD). Basic and acidic residues predominate over residues 363–377 (QGERGDEGMKGDPGR). Residues 389-399 (EKGSPGIPGNP) are compositionally biased toward low complexity. 5 consecutive short sequence motifs (cell attachment site) follow at residues 426–428 (RGD), 444–446 (RGD), 465–467 (RGD), 489–491 (RGD), and 498–500 (RGD). The tract at residues 514–519 (GFSYPG) is interruption in collagenous region. Positions 534-543 (GPKGGRGELG) are enriched in gly residues. Residues 591 to 1022 (DCDVMTYVRE…FFDRFIRWIC (432 aa)) are nonhelical region. 2 VWFA domains span residues 613–738 (ALDI…YDPR) and 833–957 (DIVF…ITGS). Residues Asn630 and Asn897 are each glycosylated (N-linked (GlcNAc...) asparagine).

It belongs to the type VI collagen family. In terms of assembly, trimers composed of three different chains: alpha 1(VI), alpha 2(VI), and alpha 3(VI). Post-translationally, prolines at the third position of the tripeptide repeating unit (G-X-Y) are hydroxylated in some or all of the chains.

The protein resides in the secreted. Its subcellular location is the extracellular space. It is found in the extracellular matrix. Its function is as follows. Collagen VI acts as a cell-binding protein. The chain is Collagen alpha-2(VI) chain (COL6A2) from Gallus gallus (Chicken).